Consider the following 356-residue polypeptide: tRNA N6-adenosine threonylcarbamoyltransferase (356 aa).

2 residues coordinate Fe cation: His-115 and His-119. Residues 138-142 (LVSGG), Asp-171, Gly-184, and Asn-283 each bind substrate. Asp-311 is a binding site for Fe cation.

Belongs to the KAE1 / TsaD family. Fe(2+) is required as a cofactor.

The protein localises to the cytoplasm. The catalysed reaction is L-threonylcarbamoyladenylate + adenosine(37) in tRNA = N(6)-L-threonylcarbamoyladenosine(37) in tRNA + AMP + H(+). Its function is as follows. Required for the formation of a threonylcarbamoyl group on adenosine at position 37 (t(6)A37) in tRNAs that read codons beginning with adenine. Is involved in the transfer of the threonylcarbamoyl moiety of threonylcarbamoyl-AMP (TC-AMP) to the N6 group of A37, together with TsaE and TsaB. TsaD likely plays a direct catalytic role in this reaction. In Prochlorococcus marinus (strain MIT 9313), this protein is tRNA N6-adenosine threonylcarbamoyltransferase.